Consider the following 194-residue polypeptide: 4'-phosphooxetanocin A phosphatase (194 aa).

4'-phosphooxetanocin A contacts are provided by Arg-16 and Trp-17. Position 17 (Trp-17) interacts with oxetanocin A. 3 residues coordinate Mg(2+): His-31, His-66, and Asp-67. His-75, Ser-78, and Lys-81 together coordinate 4'-phosphooxetanocin A. Residues His-75 and Ser-78 each contribute to the oxetanocin A site. Asp-132 provides a ligand contact to Mg(2+).

It belongs to the 5DNU family. As to quaternary structure, homodimer. Mg(2+) serves as cofactor. It depends on Co(2+) as a cofactor. Mn(2+) is required as a cofactor.

The enzyme catalyses 4'-phosphooxetanocin A + H2O = oxetanocin A + phosphate. Functionally, phosphohydrolase involved in the biosynthesis of oxetanocin A (OXT-A), a nucleoside analog with antitumor, antiviral and antibacterial properties. Catalyzes the hydrolysis of phosphooxetanocin A (OXT-A-P) to generate oxetanocin A (OXT-A) and a molecule of inorganic phosphate. Can also bind and hydrolyze OXT triphosphate (OXT-A-PPP) and OXT diphosphate (OXT-A-PP), and thus catalyze the sequential hydrolysis of tri-, di- and mono-phosphorylated oxetanocin A compounds, releasing one molecule of inorganic phosphate at a time. In vitro can also use dATP, dAMP and dADP. This chain is 4'-phosphooxetanocin A phosphatase, found in Priestia megaterium (Bacillus megaterium).